A 242-amino-acid polypeptide reads, in one-letter code: ATP synthase subunit a (242 aa).

Helical transmembrane passes span 29 to 49, 84 to 104, 114 to 134, 140 to 160, 189 to 209, and 210 to 230; these read SSIY…LAFY, FIPL…LGMT, IIVT…VGFI, FLTL…MIVI, VIAS…IPLM, and VILI…FTIL.

Belongs to the ATPase A chain family. As to quaternary structure, F-type ATPases have 2 components, CF(1) - the catalytic core - and CF(0) - the membrane proton channel. CF(1) has five subunits: alpha(3), beta(3), gamma(1), delta(1), epsilon(1). CF(0) has three main subunits: a(1), b(2) and c(9-12). The alpha and beta chains form an alternating ring which encloses part of the gamma chain. CF(1) is attached to CF(0) by a central stalk formed by the gamma and epsilon chains, while a peripheral stalk is formed by the delta and b chains.

Its subcellular location is the cell inner membrane. Its function is as follows. Key component of the proton channel; it plays a direct role in the translocation of protons across the membrane. The chain is ATP synthase subunit a from Rickettsia prowazekii (strain Madrid E).